Reading from the N-terminus, the 316-residue chain is Probable cell division protein WhiA (316 aa).

Positions 275–309 form a DNA-binding region, H-T-H motif; the sequence is TLKELGEMVSGGKISKSGINHRLRKIDDIAEKLRA.

Belongs to the WhiA family.

In terms of biological role, involved in cell division and chromosome segregation. The chain is Probable cell division protein WhiA from Bacillus anthracis (strain CDC 684 / NRRL 3495).